Reading from the N-terminus, the 259-residue chain is Src-like-adapter 2 (259 aa).

Residues 1–20 show a composition bias toward low complexity; that stretch reads MGSLSSRGKTSSPSPSSSGP. A disordered region spans residues 1–30; that stretch reads MGSLSSRGKTSSPSPSSSGPDQEPVSMQPE. Residue G2 is the site of N-myristoyl glycine attachment. One can recognise an SH3 domain in the interval 31–91; the sequence is RHKVTAVALG…PSVYVAKVAH (61 aa). The SH2 domain maps to 93–190; that stretch reads WLYEGLSREK…GICCPLREPC (98 aa). Residues 190–259 are SLA C-terminal; sequence CVLQKLGPLP…SLAEDPLDDA (70 aa).

As to quaternary structure, interacts (via its C-terminal domain) with CBL (phosphorylated). Interacts (via SH2 domain) with ZAP70 (phosphorylated) and CD3Z (phosphorylated). Interacts (via SH2 domain) with CSF1R (phosphorylated). Phosphorylated by CSF1R. In terms of tissue distribution, mainly expressed in immune system. Highly expressed in spleen and thymus and expressed at intermediate levels in lung. Not expressed in liver, heart and brain. Isoform 1 is predominant in lung and spleen, while isoform 2 is predominant in thymus.

The protein localises to the cytoplasm. It is found in the cell membrane. It localises to the cytoplasmic vesicle. The protein resides in the late endosome. Adapter protein, which negatively regulates T-cell receptor (TCR) signaling. Inhibits T-cell antigen-receptor induced activation of nuclear factor of activated T-cells. May act by linking signaling proteins such as ZAP70 with CBL, leading to a CBL dependent degradation of signaling proteins. The protein is Src-like-adapter 2 (Sla2) of Mus musculus (Mouse).